The chain runs to 760 residues: 5-methyltetrahydropteroyltriglutamate--homocysteine methyltransferase (760 aa).

Residues Arg-17–Lys-20 and Lys-113 each bind 5-methyltetrahydropteroyltri-L-glutamate. Residues Ile-433–Ser-435 and Glu-486 each bind L-homocysteine. Residues Ile-433–Ser-435 and Glu-486 each bind L-methionine. 5-methyltetrahydropteroyltri-L-glutamate contacts are provided by residues Arg-517–Cys-518 and Trp-563. Position 601 (Asp-601) interacts with L-homocysteine. Asp-601 serves as a coordination point for L-methionine. Glu-607 provides a ligand contact to 5-methyltetrahydropteroyltri-L-glutamate. Zn(2+)-binding residues include His-643, Cys-645, and Glu-667. Residue His-696 is the Proton donor of the active site. Cys-728 lines the Zn(2+) pocket.

It belongs to the vitamin-B12 independent methionine synthase family. Zn(2+) serves as cofactor.

The catalysed reaction is 5-methyltetrahydropteroyltri-L-glutamate + L-homocysteine = tetrahydropteroyltri-L-glutamate + L-methionine. It functions in the pathway amino-acid biosynthesis; L-methionine biosynthesis via de novo pathway; L-methionine from L-homocysteine (MetE route): step 1/1. Catalyzes the transfer of a methyl group from 5-methyltetrahydrofolate to homocysteine resulting in methionine formation. This is 5-methyltetrahydropteroyltriglutamate--homocysteine methyltransferase from Chromobacterium violaceum (strain ATCC 12472 / DSM 30191 / JCM 1249 / CCUG 213 / NBRC 12614 / NCIMB 9131 / NCTC 9757 / MK).